The following is a 213-amino-acid chain: MAKVDFSLYLITDRHQAGGRDLLAVVEGALAGGVRCVQLREKDLPARTLLELARAMRRLTDRFGARLLINDRVDIALAAGADGVHLGEEGMPAAVARELLGSGRLIGVSCHGRGGAAAAVAQGADFITFGPVYPTPSKAAYGEPVGIDQLAATTKEIHIPVFALGGIKEANIPEALAAGAAGVALISAIIADPDPRERARALLALLPPRTRDE.

4-amino-2-methyl-5-(diphosphooxymethyl)pyrimidine is bound by residues 38–42 and Asn-70; that span reads QLREK. Position 71 (Asp-71) interacts with Mg(2+). Ser-109 contributes to the 4-amino-2-methyl-5-(diphosphooxymethyl)pyrimidine binding site. 2-[(2R,5Z)-2-carboxy-4-methylthiazol-5(2H)-ylidene]ethyl phosphate is bound at residue 135-137; the sequence is TPS. Lys-138 contributes to the 4-amino-2-methyl-5-(diphosphooxymethyl)pyrimidine binding site. Residues Gly-166 and 186–187 contribute to the 2-[(2R,5Z)-2-carboxy-4-methylthiazol-5(2H)-ylidene]ethyl phosphate site; that span reads IS.

It belongs to the thiamine-phosphate synthase family. The cofactor is Mg(2+).

It carries out the reaction 2-[(2R,5Z)-2-carboxy-4-methylthiazol-5(2H)-ylidene]ethyl phosphate + 4-amino-2-methyl-5-(diphosphooxymethyl)pyrimidine + 2 H(+) = thiamine phosphate + CO2 + diphosphate. The enzyme catalyses 2-(2-carboxy-4-methylthiazol-5-yl)ethyl phosphate + 4-amino-2-methyl-5-(diphosphooxymethyl)pyrimidine + 2 H(+) = thiamine phosphate + CO2 + diphosphate. It catalyses the reaction 4-methyl-5-(2-phosphooxyethyl)-thiazole + 4-amino-2-methyl-5-(diphosphooxymethyl)pyrimidine + H(+) = thiamine phosphate + diphosphate. It functions in the pathway cofactor biosynthesis; thiamine diphosphate biosynthesis; thiamine phosphate from 4-amino-2-methyl-5-diphosphomethylpyrimidine and 4-methyl-5-(2-phosphoethyl)-thiazole: step 1/1. Condenses 4-methyl-5-(beta-hydroxyethyl)thiazole monophosphate (THZ-P) and 2-methyl-4-amino-5-hydroxymethyl pyrimidine pyrophosphate (HMP-PP) to form thiamine monophosphate (TMP). This is Putative thiamine-phosphate synthase (thiE) from Geobacter sulfurreducens (strain ATCC 51573 / DSM 12127 / PCA).